Consider the following 199-residue polypeptide: Octanoyltransferase (199 aa).

The region spanning serine 27–lysine 199 is the BPL/LPL catalytic domain. Residues arginine 66–histidine 73, serine 133–glycine 135, and glycine 146–alanine 148 each bind substrate. Residue cysteine 164 is the Acyl-thioester intermediate of the active site.

The protein belongs to the LipB family.

Its subcellular location is the cytoplasm. The enzyme catalyses octanoyl-[ACP] + L-lysyl-[protein] = N(6)-octanoyl-L-lysyl-[protein] + holo-[ACP] + H(+). It functions in the pathway protein modification; protein lipoylation via endogenous pathway; protein N(6)-(lipoyl)lysine from octanoyl-[acyl-carrier-protein]: step 1/2. Functionally, catalyzes the transfer of endogenously produced octanoic acid from octanoyl-acyl-carrier-protein onto the lipoyl domains of lipoate-dependent enzymes. Lipoyl-ACP can also act as a substrate although octanoyl-ACP is likely to be the physiological substrate. This is Octanoyltransferase from Legionella pneumophila (strain Corby).